Consider the following 211-residue polypeptide: ATP-dependent Clp protease proteolytic subunit (211 aa).

The Nucleophile role is filled by Ser114. His139 is an active-site residue.

This sequence belongs to the peptidase S14 family. In terms of assembly, fourteen ClpP subunits assemble into 2 heptameric rings which stack back to back to give a disk-like structure with a central cavity, resembling the structure of eukaryotic proteasomes.

It is found in the cytoplasm. It carries out the reaction Hydrolysis of proteins to small peptides in the presence of ATP and magnesium. alpha-casein is the usual test substrate. In the absence of ATP, only oligopeptides shorter than five residues are hydrolyzed (such as succinyl-Leu-Tyr-|-NHMec, and Leu-Tyr-Leu-|-Tyr-Trp, in which cleavage of the -Tyr-|-Leu- and -Tyr-|-Trp bonds also occurs).. Functionally, cleaves peptides in various proteins in a process that requires ATP hydrolysis. Has a chymotrypsin-like activity. Plays a major role in the degradation of misfolded proteins. The chain is ATP-dependent Clp protease proteolytic subunit from Pseudomonas fluorescens (strain SBW25).